Here is a 358-residue protein sequence, read N- to C-terminus: 3-dehydroquinate synthase (358 aa).

NAD(+) contacts are provided by residues 104-108 (GVIGD), 128-129 (TT), Lys-140, Lys-149, and 167-170 (FLNT). Zn(2+) contacts are provided by Glu-182, His-246, and His-260.

The protein belongs to the sugar phosphate cyclases superfamily. Dehydroquinate synthase family. Co(2+) is required as a cofactor. It depends on Zn(2+) as a cofactor. Requires NAD(+) as cofactor.

It localises to the cytoplasm. The catalysed reaction is 7-phospho-2-dehydro-3-deoxy-D-arabino-heptonate = 3-dehydroquinate + phosphate. Its pathway is metabolic intermediate biosynthesis; chorismate biosynthesis; chorismate from D-erythrose 4-phosphate and phosphoenolpyruvate: step 2/7. Functionally, catalyzes the conversion of 3-deoxy-D-arabino-heptulosonate 7-phosphate (DAHP) to dehydroquinate (DHQ). This is 3-dehydroquinate synthase from Staphylococcus carnosus (strain TM300).